The following is a 692-amino-acid chain: Elongation factor G 2 (692 aa).

The tr-type G domain occupies 8–283; that stretch reads EKTRNIGIMA…AVIDYMPSPV (276 aa). GTP contacts are provided by residues 17–24, 81–85, and 135–138; these read AHIDAGKT, DTPGH, and NKMD.

The protein belongs to the TRAFAC class translation factor GTPase superfamily. Classic translation factor GTPase family. EF-G/EF-2 subfamily.

The protein resides in the cytoplasm. In terms of biological role, catalyzes the GTP-dependent ribosomal translocation step during translation elongation. During this step, the ribosome changes from the pre-translocational (PRE) to the post-translocational (POST) state as the newly formed A-site-bound peptidyl-tRNA and P-site-bound deacylated tRNA move to the P and E sites, respectively. Catalyzes the coordinated movement of the two tRNA molecules, the mRNA and conformational changes in the ribosome. The chain is Elongation factor G 2 from Syntrophotalea carbinolica (strain DSM 2380 / NBRC 103641 / GraBd1) (Pelobacter carbinolicus).